The chain runs to 298 residues: Ethanolamine ammonia-lyase small subunit (298 aa).

The adenosylcob(III)alamin site is built by V210, E231, and C261.

This sequence belongs to the EutC family. As to quaternary structure, the basic unit is a heterodimer which dimerizes to form tetramers. The heterotetramers trimerize; 6 large subunits form a core ring with 6 small subunits projecting outwards. Adenosylcob(III)alamin is required as a cofactor.

The protein resides in the bacterial microcompartment. It catalyses the reaction ethanolamine = acetaldehyde + NH4(+). It participates in amine and polyamine degradation; ethanolamine degradation. Catalyzes the deamination of various vicinal amino-alcohols to oxo compounds. Allows this organism to utilize ethanolamine as the sole source of nitrogen and carbon in the presence of external vitamin B12. This chain is Ethanolamine ammonia-lyase small subunit, found in Salmonella typhi.